A 58-amino-acid chain; its full sequence is UPF0391 membrane protein VP0082 (58 aa).

2 helical membrane-spanning segments follow: residues 4-24 and 30-50; these read WMFIFLALALVSAVLGFSGIA and VAQVIFYLFLLSLIVSIVFVI.

The protein belongs to the UPF0391 family.

The protein resides in the cell membrane. This is UPF0391 membrane protein VP0082 from Vibrio parahaemolyticus serotype O3:K6 (strain RIMD 2210633).